A 347-amino-acid polypeptide reads, in one-letter code: NADH-ubiquinone oxidoreductase chain 2 (347 aa).

11 helical membrane-spanning segments follow: residues 5–22 (ILIT…IVLF), 26–45 (WFMI…PILM), 60–80 (FLTQ…NLLC), 96–116 (TMIT…FWVP), 122–142 (ISLS…LSIL), 153–173 (LLLM…LNQT), 178–198 (ILAY…VYNP), 200–220 (LAIL…MLFM), 237–257 (FPLM…LPPL), 274–294 (DMII…YFYT), and 325–345 (LLAP…MLAA).

Belongs to the complex I subunit 2 family. In terms of assembly, core subunit of respiratory chain NADH dehydrogenase (Complex I) which is composed of 45 different subunits. Interacts with TMEM242.

The protein localises to the mitochondrion inner membrane. It carries out the reaction a ubiquinone + NADH + 5 H(+)(in) = a ubiquinol + NAD(+) + 4 H(+)(out). Its function is as follows. Core subunit of the mitochondrial membrane respiratory chain NADH dehydrogenase (Complex I) which catalyzes electron transfer from NADH through the respiratory chain, using ubiquinone as an electron acceptor. Essential for the catalytic activity and assembly of complex I. The sequence is that of NADH-ubiquinone oxidoreductase chain 2 from Ailuropoda melanoleuca (Giant panda).